Here is a 353-residue protein sequence, read N- to C-terminus: MAQKVRIALDAMGGDFGPSVVVPGAGISLTRHPDTEFILFGDSAAINRQLDKHPAMKAVSRVVHTDVAITMEEKPSQALRRGRKTSSMWLALDAVRKGEADVAVSAGNTGALMAMSRFNLRMLPGIDRPAIACVWPTIRSESVVLDVGASIGADARHLASLAIMGSAMARVLFDIERPTVGLLNIGVEEVKGVEEVKEAAELLRSMDLPELEFIGFVEGDGIGKGAADVIVTEGFSGNIALKTAEGTARQIAEYLRSAMSRTWRSKIGYLFAKSAFKALRDKMDPRKVNGGVFLGLNGVVIKSHGGTDAEGFASAVDVGYEMVRYDLLTKINQTFNRDGGSLTRMPTAQEAVS.

This sequence belongs to the PlsX family. In terms of assembly, homodimer. Probably interacts with PlsY.

Its subcellular location is the cytoplasm. It catalyses the reaction a fatty acyl-[ACP] + phosphate = an acyl phosphate + holo-[ACP]. Its pathway is lipid metabolism; phospholipid metabolism. In terms of biological role, catalyzes the reversible formation of acyl-phosphate (acyl-PO(4)) from acyl-[acyl-carrier-protein] (acyl-ACP). This enzyme utilizes acyl-ACP as fatty acyl donor, but not acyl-CoA. This is Phosphate acyltransferase from Afipia carboxidovorans (strain ATCC 49405 / DSM 1227 / KCTC 32145 / OM5) (Oligotropha carboxidovorans).